The sequence spans 189 residues: WASH complex subunit homolog 3 (189 aa).

The stretch at 35–74 (MTEMLNNFGNKMEDILEKAEQSLDTADRKLRLMESKLAGM) forms a coiled coil. 2 disordered regions span residues 76–101 (LEDKSTTATPSSAPEIDEIHESNPSS) and 150–189 (SEGVDPSILKRGDEPSRPQAQTSRNYESSGESTASFSDSD). A compositionally biased stretch (basic and acidic residues) spans 150–165 (SEGVDPSILKRGDEPS). Positions 167–189 (PQAQTSRNYESSGESTASFSDSD) are enriched in polar residues. T182 carries the phosphothreonine modification.

The protein belongs to the CCDC53 family. As to quaternary structure, probable component of the WASH complex. Component of the DHIC (ddl-1-containing hsf-1 inhibitory complex), which contains at least ddl-1, ddl-2, hsb-1 and hsf-1. Within the complex, interacts with ddl-2. Within the complex, interacts with hsb-1. Within the complex, interacts with hsf-1. Formation of the DHIC may be dependent upon the Insulin/IGF-1-like signaling (IIS) mediated pathway. Post-translationally, phosphorylated. Phosphorylation on Thr-182 may promote DHIC complex dissociation and consequently the activation of heat-shock transcription factor hsf-1. Phosphorylation is modulated by the Insulin/IGF-1-like signaling (IIS) mediated pathway. In terms of tissue distribution, expressed in pharynx, intestine, body wall muscles, vulva muscles, spermatheca, and several head and tail neurons.

Its function is as follows. Acts as a component of the WASH core complex that functions as a nucleation-promoting factor (NPF) at the surface of endosomes, where it recruits and activates the Arp2/3 complex to induce actin polymerization, playing a key role in the fission of tubules that serve as transport intermediates during endosome sorting. Acts as a component of the DHIC (ddl-1-containing hsf-1 inhibitory complex) which modulates lifespan by sequestering the heat-shock transcription factor hsf-1 to negatively regulate its binding to DNA and its transcriptional activity. This Caenorhabditis elegans protein is WASH complex subunit homolog 3 (ddl-1).